We begin with the raw amino-acid sequence, 228 residues long: LHFPL tetraspan subfamily member 2 protein (228 aa).

4 helical membrane-spanning segments follow: residues M11–A31, I102–M122, I132–I152, and L181–F201.

The protein belongs to the LHFP family. Expressed in all tissues and cell lines examined except brain and peripheral blood leukocytes.

Its subcellular location is the membrane. Its function is as follows. Plays a role in female and male fertility. Involved in distal reproductive tract development. The sequence is that of LHFPL tetraspan subfamily member 2 protein from Homo sapiens (Human).